We begin with the raw amino-acid sequence, 268 residues long: UPF0328 protein ECU03_0040 (268 aa).

This sequence belongs to the UPF0328 family.

The chain is UPF0328 protein ECU03_0040 from Encephalitozoon cuniculi (strain GB-M1) (Microsporidian parasite).